The chain runs to 439 residues: uncharacterized protein (439 aa).

An N-terminal signal peptide occupies residues 1-19 (MKKLLLTASIICLASAGLA).

This is an uncharacterized protein from Rickettsia felis (strain ATCC VR-1525 / URRWXCal2) (Rickettsia azadi).